The sequence spans 471 residues: MYELQQHRKFSALDEMLPAFYYCYLLCFPVSSDNRASTSELLQTSLSSLAEERPYLTGTVRRDMESSVRKGHLILDIPNPFEDLRIVFNDLTGPKSQWKETYQDLKDTGMPPHKLDANLLAPLTAGIGETRKVMSVQANFIHGGLLIAFCFHHNFVDAYGAGRIIARFSDHCNGTVDLKNSADPEGDGTDSRGIADLLDVELLKKQYKFEDLESDPNLWRLNCLEFRGVNDFRWPDFIPALLPVRKPPVISSMFSFSSDALAEIKAMAQPNQSGAWVSTNDALVAFLWRHTMRARFPSSRTESEPPNRKSNVVVALDGRKDLSISPTYIGNCLFHCFTDLPINMVGSESTHLGDIAIKVRQTITAARNKTLLKAVVGLAATHPDCQTIKYANDNLGPDLYVTSWIDLPFYKLEWGPLGKTEFFRIPDRQFESLCCILPPKDGVVQLITSMEEDHSKRLRSDAEFTRFATYR.

It belongs to the fumigaclavine B O-acetyltransferase family. As to quaternary structure, monomer.

The protein operates within sesquiterpene biosynthesis. Functionally, O-acetyltransferase; part of the gene cluster that mediates the biosynthesis of PR-toxin, a bicyclic sesquiterpene belonging to the eremophilane class and acting as a mycotoxin. The first step of the pathway is catalyzed by the aristolochene synthase which performs the cyclization of trans,trans-farnesyl diphosphate (FPP) to the bicyclic sesquiterpene aristolochene. Following the formation of aristolochene, the non-oxygenated aristolochene is converted to the trioxygenated intermediate eremofortin B, via 7-epi-neopetasone. This conversion appears to involve three enzymes, a hydroxysterol oxidase-like enzyme, the quinone-oxidase prx3 that forms the quinone-type-structure in the bicyclic nucleus of aristolochene with the C8-oxo group and the C-3 hydroxyl group, and the P450 monooxygenase ORF6 that introduces the epoxide at the double bond between carbons 1 and 2. No monoxy or dioxy-intermediates have been reported to be released to the broth, so these three early oxidative reactions may be coupled together. Eremofortin B is further oxidized by another P450 monooxygenase, that introduces a second epoxide between carbons 7 and 11 prior to acetylation to eremofortin A by the acetyltransferase ORF8. The second epoxidation may be performed by a second P450 monooxygenase. After the acetylation step, eremofortin A is converted to eremofortin C and then to PR-toxin. First the conversion of eremofortin A to eremofortin C proceeds by oxidation of the side chain of the molecule at C-12 and is catalyzed by the short-chain oxidoreductase prx1. The cytochrome P450 monooxygenase ORF6 is probably also involved in this step. The primary alcohol formed at C-12 is finally oxidized by the short-chain alcohol dehydrogenase prx4 that forms PR-toxin. The polypeptide is Eremophilane O-acetyltransferase ORF8 (Penicillium roqueforti (strain FM164)).